The sequence spans 429 residues: Glutamate-1-semialdehyde 2,1-aminomutase (429 aa).

At Lys-265 the chain carries N6-(pyridoxal phosphate)lysine.

The protein belongs to the class-III pyridoxal-phosphate-dependent aminotransferase family. HemL subfamily. Homodimer. Requires pyridoxal 5'-phosphate as cofactor.

The protein resides in the cytoplasm. The catalysed reaction is (S)-4-amino-5-oxopentanoate = 5-aminolevulinate. Its pathway is porphyrin-containing compound metabolism; protoporphyrin-IX biosynthesis; 5-aminolevulinate from L-glutamyl-tRNA(Glu): step 2/2. This Ectopseudomonas mendocina (strain ymp) (Pseudomonas mendocina) protein is Glutamate-1-semialdehyde 2,1-aminomutase.